We begin with the raw amino-acid sequence, 333 residues long: Glycerol-3-phosphate dehydrogenase [NAD(P)+] (333 aa).

Ser10, Trp11, His31, Arg32, and Lys105 together coordinate NADPH. Lys105, Gly136, and Ser138 together coordinate sn-glycerol 3-phosphate. Ala140 is an NADPH binding site. The sn-glycerol 3-phosphate site is built by Lys191, Asp244, Ser254, Arg255, and Asn256. The active-site Proton acceptor is Lys191. Arg255 provides a ligand contact to NADPH. NADPH-binding residues include Ile279 and Glu281.

The protein belongs to the NAD-dependent glycerol-3-phosphate dehydrogenase family.

It is found in the cytoplasm. It catalyses the reaction sn-glycerol 3-phosphate + NAD(+) = dihydroxyacetone phosphate + NADH + H(+). The catalysed reaction is sn-glycerol 3-phosphate + NADP(+) = dihydroxyacetone phosphate + NADPH + H(+). It participates in membrane lipid metabolism; glycerophospholipid metabolism. In terms of biological role, catalyzes the reduction of the glycolytic intermediate dihydroxyacetone phosphate (DHAP) to sn-glycerol 3-phosphate (G3P), the key precursor for phospholipid synthesis. The chain is Glycerol-3-phosphate dehydrogenase [NAD(P)+] from Chlorobium luteolum (strain DSM 273 / BCRC 81028 / 2530) (Pelodictyon luteolum).